The following is a 157-amino-acid chain: ATP synthase subunit b (157 aa).

The chain crosses the membrane as a helical span at residues 7–27 (LIAQLVVFFILAWFTMKFVWP).

This sequence belongs to the ATPase B chain family. In terms of assembly, F-type ATPases have 2 components, F(1) - the catalytic core - and F(0) - the membrane proton channel. F(1) has five subunits: alpha(3), beta(3), gamma(1), delta(1), epsilon(1). F(0) has three main subunits: a(1), b(2) and c(10-14). The alpha and beta chains form an alternating ring which encloses part of the gamma chain. F(1) is attached to F(0) by a central stalk formed by the gamma and epsilon chains, while a peripheral stalk is formed by the delta and b chains.

The protein resides in the cell inner membrane. F(1)F(0) ATP synthase produces ATP from ADP in the presence of a proton or sodium gradient. F-type ATPases consist of two structural domains, F(1) containing the extramembraneous catalytic core and F(0) containing the membrane proton channel, linked together by a central stalk and a peripheral stalk. During catalysis, ATP synthesis in the catalytic domain of F(1) is coupled via a rotary mechanism of the central stalk subunits to proton translocation. In terms of biological role, component of the F(0) channel, it forms part of the peripheral stalk, linking F(1) to F(0). The polypeptide is ATP synthase subunit b (Azoarcus sp. (strain BH72)).